The primary structure comprises 341 residues: Elongation factor Ts (341 aa).

The involved in Mg(2+) ion dislocation from EF-Tu stretch occupies residues 80 to 83 (TDFV).

This sequence belongs to the EF-Ts family.

The protein localises to the cytoplasm. Its function is as follows. Associates with the EF-Tu.GDP complex and induces the exchange of GDP to GTP. It remains bound to the aminoacyl-tRNA.EF-Tu.GTP complex up to the GTP hydrolysis stage on the ribosome. The sequence is that of Elongation factor Ts from Lactobacillus helveticus (strain DPC 4571).